A 488-amino-acid polypeptide reads, in one-letter code: Pup--protein ligase (488 aa).

Glutamate 33 contributes to the Mg(2+) binding site. Residue arginine 76 coordinates ATP. Residue tyrosine 78 participates in Mg(2+) binding. Residue aspartate 80 is the Proton acceptor of the active site. A Mg(2+)-binding site is contributed by glutamate 86. Threonine 89 and tryptophan 453 together coordinate ATP.

Belongs to the Pup ligase/Pup deamidase family. Pup-conjugating enzyme subfamily.

The catalysed reaction is ATP + [prokaryotic ubiquitin-like protein]-L-glutamate + [protein]-L-lysine = ADP + phosphate + N(6)-([prokaryotic ubiquitin-like protein]-gamma-L-glutamyl)-[protein]-L-lysine.. It participates in protein degradation; proteasomal Pup-dependent pathway. The protein operates within protein modification; protein pupylation. Its function is as follows. Catalyzes the covalent attachment of the prokaryotic ubiquitin-like protein modifier Pup to the proteasomal substrate proteins, thereby targeting them for proteasomal degradation. This tagging system is termed pupylation. The ligation reaction involves the side-chain carboxylate of the C-terminal glutamate of Pup and the side-chain amino group of a substrate lysine. The polypeptide is Pup--protein ligase (Bifidobacterium adolescentis (strain ATCC 15703 / DSM 20083 / NCTC 11814 / E194a)).